The following is a 324-amino-acid chain: o-succinylbenzoate synthase (324 aa).

Lys-135 serves as the catalytic Proton donor. 3 residues coordinate Mg(2+): Asp-163, Glu-192, and Asp-215. Lys-237 (proton acceptor) is an active-site residue.

It belongs to the mandelate racemase/muconate lactonizing enzyme family. MenC type 1 subfamily. A divalent metal cation is required as a cofactor.

It catalyses the reaction (1R,6R)-6-hydroxy-2-succinyl-cyclohexa-2,4-diene-1-carboxylate = 2-succinylbenzoate + H2O. It functions in the pathway quinol/quinone metabolism; 1,4-dihydroxy-2-naphthoate biosynthesis; 1,4-dihydroxy-2-naphthoate from chorismate: step 4/7. The protein operates within quinol/quinone metabolism; menaquinone biosynthesis. In terms of biological role, converts 2-succinyl-6-hydroxy-2,4-cyclohexadiene-1-carboxylate (SHCHC) to 2-succinylbenzoate (OSB). The polypeptide is o-succinylbenzoate synthase (Aliivibrio fischeri (strain MJ11) (Vibrio fischeri)).